The sequence spans 131 residues: Probable ATP synthase subunit g 1, mitochondrial (131 aa).

Belongs to the ATPase g subunit family. As to quaternary structure, subunit of the F-type ATPase which has 2 components, CF(1) - the catalytic core - and CF(0) - the membrane proton channel.

The protein resides in the mitochondrion membrane. In terms of biological role, mitochondrial membrane ATP synthase (F(1)F(0) ATP synthase or Complex V) produces ATP from ADP in the presence of a proton gradient across the membrane which is generated by electron transport complexes of the respiratory chain. F-type ATPases consist of two structural domains, F(1) - containing the extramembraneous catalytic core, and F(0) - containing the membrane proton channel, linked together by a central stalk and a peripheral stalk. During catalysis, ATP synthesis in the catalytic domain of F(1) is coupled via a rotary mechanism of the central stalk subunits to proton translocation. Part of the complex F(0) domain. Minor subunit located with subunit a in the membrane. This Caenorhabditis elegans protein is Probable ATP synthase subunit g 1, mitochondrial.